We begin with the raw amino-acid sequence, 360 residues long: Membrane-bound lytic murein transglycosylase C (360 aa).

Positions 1-16 (MKKYLALALIAPLLVS) are cleaved as a signal peptide. Residue cysteine 17 is the site of N-palmitoyl cysteine attachment. Cysteine 17 is lipidated: S-diacylglycerol cysteine.

It belongs to the transglycosylase Slt family.

It localises to the cell outer membrane. The catalysed reaction is Exolytic cleavage of the (1-&gt;4)-beta-glycosidic linkage between N-acetylmuramic acid (MurNAc) and N-acetylglucosamine (GlcNAc) residues in peptidoglycan, from either the reducing or the non-reducing ends of the peptidoglycan chains, with concomitant formation of a 1,6-anhydrobond in the MurNAc residue.. In terms of biological role, murein-degrading enzyme. May play a role in recycling of muropeptides during cell elongation and/or cell division. This is Membrane-bound lytic murein transglycosylase C from Klebsiella pneumoniae (strain 342).